Here is a 652-residue protein sequence, read N- to C-terminus: DNA mismatch repair protein MutL (652 aa).

This sequence belongs to the DNA mismatch repair MutL/HexB family.

Its function is as follows. This protein is involved in the repair of mismatches in DNA. It is required for dam-dependent methyl-directed DNA mismatch repair. May act as a 'molecular matchmaker', a protein that promotes the formation of a stable complex between two or more DNA-binding proteins in an ATP-dependent manner without itself being part of a final effector complex. This chain is DNA mismatch repair protein MutL, found in Aliivibrio salmonicida (strain LFI1238) (Vibrio salmonicida (strain LFI1238)).